The primary structure comprises 294 residues: UPF0761 membrane protein YPK_4186 (294 aa).

7 helical membrane passes run 44 to 64 (LLSL…FPMF), 67 to 87 (ISIK…GDII), 108 to 128 (GLIV…NIIW), 136 to 156 (LVFS…LVGA), 185 to 205 (VFPL…VPTV), 212 to 232 (ALIG…GFAM), and 246 to 266 (VLAV…IVLL).

Belongs to the UPF0761 family.

It localises to the cell inner membrane. The protein is UPF0761 membrane protein YPK_4186 of Yersinia pseudotuberculosis serotype O:3 (strain YPIII).